A 369-amino-acid chain; its full sequence is Anhydro-N-acetylmuramic acid kinase (369 aa).

Residue 12-19 (GTSLDGVD) participates in ATP binding.

It belongs to the anhydro-N-acetylmuramic acid kinase family.

The catalysed reaction is 1,6-anhydro-N-acetyl-beta-muramate + ATP + H2O = N-acetyl-D-muramate 6-phosphate + ADP + H(+). The protein operates within amino-sugar metabolism; 1,6-anhydro-N-acetylmuramate degradation. It functions in the pathway cell wall biogenesis; peptidoglycan recycling. In terms of biological role, catalyzes the specific phosphorylation of 1,6-anhydro-N-acetylmuramic acid (anhMurNAc) with the simultaneous cleavage of the 1,6-anhydro ring, generating MurNAc-6-P. Is required for the utilization of anhMurNAc either imported from the medium or derived from its own cell wall murein, and thus plays a role in cell wall recycling. This chain is Anhydro-N-acetylmuramic acid kinase, found in Escherichia coli O45:K1 (strain S88 / ExPEC).